We begin with the raw amino-acid sequence, 548 residues long: Probable malate:quinone oxidoreductase (548 aa).

A disordered region spans residues 520–548 (YDRPQAADSTPKPQLKPQPVQKEVADIAL). Low complexity predominate over residues 530 to 541 (PKPQLKPQPVQK).

The protein belongs to the MQO family. It depends on FAD as a cofactor.

The catalysed reaction is (S)-malate + a quinone = a quinol + oxaloacetate. It participates in carbohydrate metabolism; tricarboxylic acid cycle; oxaloacetate from (S)-malate (quinone route): step 1/1. This is Probable malate:quinone oxidoreductase from Shigella dysenteriae serotype 1 (strain Sd197).